The primary structure comprises 139 residues: Translation initiation factor 2 subunit beta (139 aa).

Belongs to the eIF-2-beta/eIF-5 family. In terms of assembly, heterotrimer composed of an alpha, a beta and a gamma chain.

EIF-2 functions in the early steps of protein synthesis by forming a ternary complex with GTP and initiator tRNA. The protein is Translation initiation factor 2 subunit beta of Saccharolobus solfataricus (strain ATCC 35092 / DSM 1617 / JCM 11322 / P2) (Sulfolobus solfataricus).